The following is a 204-amino-acid chain: Auxin-binding protein 4 (204 aa).

An N-terminal signal peptide occupies residues 1–41; the sequence is MVRRRPATGAAPRPHLAAVGRGLLLASVLAAAASSLPVAES. A disulfide bridge links Cys43 with Cys196. Residues His98, His100, and Glu104 each contribute to the Zn(2+) site. Asn136 carries an N-linked (GlcNAc...) asparagine glycan. Residue His147 coordinates Zn(2+). The Prevents secretion from ER signature appears at 201 to 204; the sequence is KDEL.

In terms of assembly, homodimer.

The protein resides in the endoplasmic reticulum lumen. Its function is as follows. This is probably a receptor for the plant hormone auxin. The protein is Auxin-binding protein 4 (ABP4) of Zea mays (Maize).